We begin with the raw amino-acid sequence, 173 residues long: CKLF-like MARVEL transmembrane domain-containing protein 8 (173 aa).

In terms of domain architecture, MARVEL spans 36 to 168 (FLRTPPGLLI…NTYFSFIAWR (133 aa)). The next 4 membrane-spanning stretches (helical) occupy residues 41–61 (PGLL…LIAG), 70–90 (FGWV…FLIV), 105–125 (TTVG…AAIV), and 147–167 (FFAF…FIAW).

Belongs to the chemokine-like factor family.

The protein resides in the membrane. This Mus musculus (Mouse) protein is CKLF-like MARVEL transmembrane domain-containing protein 8 (Cmtm8).